A 316-amino-acid chain; its full sequence is ATP synthase gamma chain (316 aa).

It belongs to the ATPase gamma chain family. F-type ATPases have 2 components, CF(1) - the catalytic core - and CF(0) - the membrane proton channel. CF(1) has five subunits: alpha(3), beta(3), gamma(1), delta(1), epsilon(1). CF(0) has three main subunits: a, b and c.

It is found in the cellular thylakoid membrane. Produces ATP from ADP in the presence of a proton gradient across the membrane. The gamma chain is believed to be important in regulating ATPase activity and the flow of protons through the CF(0) complex. This is ATP synthase gamma chain from Prochlorococcus marinus (strain MIT 9312).